We begin with the raw amino-acid sequence, 500 residues long: Aspartyl/glutamyl-tRNA(Asn/Gln) amidotransferase subunit B (500 aa).

The protein belongs to the GatB/GatE family. GatB subfamily. Heterotrimer of A, B and C subunits.

It catalyses the reaction L-glutamyl-tRNA(Gln) + L-glutamine + ATP + H2O = L-glutaminyl-tRNA(Gln) + L-glutamate + ADP + phosphate + H(+). It carries out the reaction L-aspartyl-tRNA(Asn) + L-glutamine + ATP + H2O = L-asparaginyl-tRNA(Asn) + L-glutamate + ADP + phosphate + 2 H(+). Functionally, allows the formation of correctly charged Asn-tRNA(Asn) or Gln-tRNA(Gln) through the transamidation of misacylated Asp-tRNA(Asn) or Glu-tRNA(Gln) in organisms which lack either or both of asparaginyl-tRNA or glutaminyl-tRNA synthetases. The reaction takes place in the presence of glutamine and ATP through an activated phospho-Asp-tRNA(Asn) or phospho-Glu-tRNA(Gln). The polypeptide is Aspartyl/glutamyl-tRNA(Asn/Gln) amidotransferase subunit B (Rhizobium leguminosarum bv. trifolii (strain WSM2304)).